We begin with the raw amino-acid sequence, 434 residues long: Bcl-2-like protein 13 (434 aa).

The BH4 motif lies at 14–30 (ETKYVVLSYLGLLSQEK). A Phosphoserine modification is found at Ser-35. The short motif at 97 to 113 (IEDCLAHLGERVSQDLK) is the BH3 element. Residues 144–154 (ASGWNKLLVPL) carry the BH1 motif. The BH2 signature appears at 190–203 (FIIQQGGWGSVFSL). The interval 224-245 (LPSDNSGQVSPPESPTVTTSWQ) is disordered. The span at 226 to 245 (SDNSGQVSPPESPTVTTSWQ) shows a compositional bias: polar residues. The A repeat unit spans residues 243–253 (SWQSESLPVSL). Ser-256, Ser-258, Ser-300, Ser-343, Ser-347, Ser-377, and Ser-387 each carry phosphoserine. Residues 258–268 (SWHTESLPVSL) form an A; approximate repeat. Residues 282 to 303 (EVKSLDSSGAGEKSENNSSNSD) form a disordered region. The segment at 363-398 (RPEAVERAEGAAQLSEERAGSRKKSHTGEAAAVRGA) is disordered. The segment covering 365–382 (EAVERAEGAAQLSEERAG) has biased composition (basic and acidic residues). A helical transmembrane segment spans residues 409–429 (VLLFGGAAAVAILAVAVGVAL).

Belongs to the Bcl-2 family. As to quaternary structure, monomer.

The protein resides in the mitochondrion membrane. Functionally, may promote the activation of caspase-3 and apoptosis. The chain is Bcl-2-like protein 13 (Bcl2l13) from Mus musculus (Mouse).